The sequence spans 224 residues: Small ribosomal subunit protein uS3 (224 aa).

One can recognise a KH type-2 domain in the interval 39–107; it reads IREFLKKKPS…DVWVEIAEVK (69 aa).

The protein belongs to the universal ribosomal protein uS3 family. As to quaternary structure, part of the 30S ribosomal subunit. Forms a tight complex with proteins S10 and S14.

Its function is as follows. Binds the lower part of the 30S subunit head. Binds mRNA in the 70S ribosome, positioning it for translation. In Chlamydia muridarum (strain MoPn / Nigg), this protein is Small ribosomal subunit protein uS3.